A 469-amino-acid chain; its full sequence is Neuraminidase (469 aa).

The Intravirion portion of the chain corresponds to 1-9 (MNPNQKIIT). Residues 10–30 (IGSVSLTFAAICFLMQIAILV) traverse the membrane as a helical segment. Residues 11-33 (GSVSLTFAAICFLMQIAILVTTV) are involved in apical transport and lipid raft association. Over 31–469 (TTVTLNFKQY…DGADINLMPI (439 aa)) the chain is Virion surface. A hypervariable stalk region region spans residues 36 to 88 (NFKQYECDPPATNQVMPCEPIIIERNITEIVYLTNTTIEREICPKLVEYRNWS). N-linked (GlcNAc...) asparagine; by host glycosylation is found at Asn61, Asn70, and Asn86. Residues 91–469 (QCKITGFAPF…DGADINLMPI (379 aa)) form a head of neuraminidase region. Intrachain disulfides connect Cys92/Cys417, Cys124/Cys129, Cys183/Cys230, Cys232/Cys237, Cys278/Cys291, Cys280/Cys289, Cys318/Cys337, and Cys421/Cys447. Arg118 provides a ligand contact to substrate. Asn146 is a glycosylation site (N-linked (GlcNAc...) asparagine; by host). Asp151 (proton donor/acceptor) is an active-site residue. Residue Arg152 coordinates substrate. Residues Asn200 and Asn234 are each glycosylated (N-linked (GlcNAc...) asparagine; by host). Residue 276–277 (EE) participates in substrate binding. Arg292 contacts substrate. Positions 293 and 297 each coordinate Ca(2+). N-linked (GlcNAc...) asparagine; by host glycosylation is present at Asn313. Ca(2+) is bound at residue Asp324. Arg371 contributes to the substrate binding site. N-linked (GlcNAc...) asparagine; by host glycosylation occurs at Asn402. Tyr406 serves as the catalytic Nucleophile.

It belongs to the glycosyl hydrolase 34 family. As to quaternary structure, homotetramer. Requires Ca(2+) as cofactor. In terms of processing, N-glycosylated.

It localises to the virion membrane. The protein resides in the host apical cell membrane. It catalyses the reaction Hydrolysis of alpha-(2-&gt;3)-, alpha-(2-&gt;6)-, alpha-(2-&gt;8)- glycosidic linkages of terminal sialic acid residues in oligosaccharides, glycoproteins, glycolipids, colominic acid and synthetic substrates.. With respect to regulation, inhibited by the neuraminidase inhibitors zanamivir (Relenza) and oseltamivir (Tamiflu). These drugs interfere with the release of progeny virus from infected cells and are effective against all influenza strains. Resistance to neuraminidase inhibitors is quite rare. Catalyzes the removal of terminal sialic acid residues from viral and cellular glycoconjugates. Cleaves off the terminal sialic acids on the glycosylated HA during virus budding to facilitate virus release. Additionally helps virus spread through the circulation by further removing sialic acids from the cell surface. These cleavages prevent self-aggregation and ensure the efficient spread of the progeny virus from cell to cell. Otherwise, infection would be limited to one round of replication. Described as a receptor-destroying enzyme because it cleaves a terminal sialic acid from the cellular receptors. May facilitate viral invasion of the upper airways by cleaving the sialic acid moieties on the mucin of the airway epithelial cells. Likely to plays a role in the budding process through its association with lipid rafts during intracellular transport. May additionally display a raft-association independent effect on budding. Plays a role in the determination of host range restriction on replication and virulence. Sialidase activity in late endosome/lysosome traffic seems to enhance virus replication. This is Neuraminidase from Influenza A virus (strain A/Swine/Kanagawa/2/1978 H1N2).